The chain runs to 1242 residues: ATP-dependent helicase/nuclease subunit A (1242 aa).

Residues 13–486 enclose the UvrD-like helicase ATP-binding domain; that stretch reads SQWTDDQWKA…IDLAKNFRSR (474 aa). 34-41 is an ATP binding site; sequence AAAGSGKT. Residues 506–806 enclose the UvrD-like helicase C-terminal domain; it reads GEIEYDADAE…RIMTIHKSKG (301 aa).

The protein belongs to the helicase family. AddA subfamily. As to quaternary structure, heterodimer of AddA and AddB/RexB. It depends on Mg(2+) as a cofactor.

It carries out the reaction Couples ATP hydrolysis with the unwinding of duplex DNA by translocating in the 3'-5' direction.. The catalysed reaction is ATP + H2O = ADP + phosphate + H(+). Functionally, the heterodimer acts as both an ATP-dependent DNA helicase and an ATP-dependent, dual-direction single-stranded exonuclease. Recognizes the chi site generating a DNA molecule suitable for the initiation of homologous recombination. The AddA nuclease domain is required for chi fragment generation; this subunit has the helicase and 3' -&gt; 5' nuclease activities. The chain is ATP-dependent helicase/nuclease subunit A from Bacillus cytotoxicus (strain DSM 22905 / CIP 110041 / 391-98 / NVH 391-98).